The primary structure comprises 303 residues: Putative deoxyribose-phosphate aldolase (303 aa).

The active-site Proton donor/acceptor is aspartate 157. Lysine 220 serves as the catalytic Schiff-base intermediate with acetaldehyde. Residue lysine 256 is the Proton donor/acceptor of the active site.

Belongs to the DeoC/FbaB aldolase family. DeoC type 2 subfamily.

The catalysed reaction is 2-deoxy-D-ribose 5-phosphate = D-glyceraldehyde 3-phosphate + acetaldehyde. It participates in carbohydrate degradation; 2-deoxy-D-ribose 1-phosphate degradation; D-glyceraldehyde 3-phosphate and acetaldehyde from 2-deoxy-alpha-D-ribose 1-phosphate: step 2/2. Catalyzes a reversible aldol reaction between acetaldehyde and D-glyceraldehyde 3-phosphate to generate 2-deoxy-D-ribose 5-phosphate. The chain is Putative deoxyribose-phosphate aldolase from Caenorhabditis elegans.